The primary structure comprises 348 residues: Oxidase ucsJ (348 aa).

The protein belongs to the avfA family.

It participates in mycotoxin biosynthesis. Its function is as follows. Oxidase; part of the gene cluster that mediates the biosynthesis of UCS1025A, a member of the pyrrolizidinone family that acts as a strong telomerase inhibitor and displays potent antibacterial and antitumor properties. These compounds share a hemiaminal-containing pyrrolizidinone core fused with a gamma-lactone, giving a furopyrrolizidine that is connected to a decalin fragment. The polyketide synthase module (PKS) of the PKS-NRPS ucsA is responsible for the synthesis of the polyketide backbone via the condensation of an acetyl-CoA starter unit with 6 malonyl-CoA units. The downstream nonribosomal peptide synthetase (NRPS) module then amidates the carboxyl end of the polyketide with a 2S,3S-methylproline derived from L-isoleucine by the 2-oxoglutarate-dependent dioxygenase ucsF which converts L-isoleucine to (4S,5S)-4-methylpyrroline-5-carboxylate that is further converted to 2S,3S-methylproline by the pyrroline-5-carboxylate reductase ucsG. Reductive release of the completed aminoacyl polyketide from the assembly line can form the 3-pyrrolin-2-one structure via an intramolecular Knoevenagel reaction. Because ucsA lacks a designated enoylreductase (ER) domain, the required activity is provided the enoyl reductase ucsL. This keto acyclic precursor is the substrate of the Diels-Alderase ucsH, that catalyzes the Diels-Alder cycloaddition. Oxidation of the 3S-methyl group to a carboxylate by the cytochrome P450 monooxygenase ucsK allows an oxa-Michael cyclization that might involve the reductase/dehydrogenase ucsI and which furnishes the furopyrrolizidine. The oxidase ucsJ likely plays a critical role in stereoselective reduction of the C5-C6 double bond to afford the required R-configured carboxylate group. Further enolization and oxidation at C5 by an unidentified enzyme affords the last intermediate that can undergo oxa-Michael cyclization to yield UCS1025A. This Acremonium sp protein is Oxidase ucsJ.